The primary structure comprises 368 residues: Flagellar P-ring protein (368 aa).

Residues 1–24 form the signal peptide; sequence MNSIFRKIVFAAFLLLALPQFALA.

It belongs to the FlgI family. As to quaternary structure, the basal body constitutes a major portion of the flagellar organelle and consists of four rings (L,P,S, and M) mounted on a central rod.

Its subcellular location is the periplasm. The protein localises to the bacterial flagellum basal body. In terms of biological role, assembles around the rod to form the L-ring and probably protects the motor/basal body from shearing forces during rotation. The protein is Flagellar P-ring protein of Geotalea uraniireducens (strain Rf4) (Geobacter uraniireducens).